Here is a 132-residue protein sequence, read N- to C-terminus: Outer membrane protein assembly factor BamE (132 aa).

A signal peptide spans 1 to 16; the sequence is MQKLVLTLLVTSLLAG. Residue Cys17 is the site of N-palmitoyl cysteine attachment. Cys17 carries the S-diacylglycerol cysteine lipid modification.

The protein belongs to the BamE family. As to quaternary structure, part of the Bam complex.

It is found in the cell outer membrane. Part of the outer membrane protein assembly complex, which is involved in assembly and insertion of beta-barrel proteins into the outer membrane. This Acinetobacter pittii (strain PHEA-2) protein is Outer membrane protein assembly factor BamE.